The chain runs to 1000 residues: Bifunctional glutamine synthetase adenylyltransferase/adenylyl-removing enzyme (1000 aa).

Residues 1 to 481 (MTAPGRRSST…LHEKLFYRPL (481 aa)) are adenylyl removase. The interval 487–1000 (QLAPGEARLS…AVVDEQFYGA (514 aa)) is adenylyl transferase.

This sequence belongs to the GlnE family. It depends on Mg(2+) as a cofactor.

The catalysed reaction is [glutamine synthetase]-O(4)-(5'-adenylyl)-L-tyrosine + phosphate = [glutamine synthetase]-L-tyrosine + ADP. It carries out the reaction [glutamine synthetase]-L-tyrosine + ATP = [glutamine synthetase]-O(4)-(5'-adenylyl)-L-tyrosine + diphosphate. In terms of biological role, involved in the regulation of glutamine synthetase GlnA, a key enzyme in the process to assimilate ammonia. When cellular nitrogen levels are high, the C-terminal adenylyl transferase (AT) inactivates GlnA by covalent transfer of an adenylyl group from ATP to specific tyrosine residue of GlnA, thus reducing its activity. Conversely, when nitrogen levels are low, the N-terminal adenylyl removase (AR) activates GlnA by removing the adenylyl group by phosphorolysis, increasing its activity. The regulatory region of GlnE binds the signal transduction protein PII (GlnB) which indicates the nitrogen status of the cell. The protein is Bifunctional glutamine synthetase adenylyltransferase/adenylyl-removing enzyme of Streptomyces avermitilis (strain ATCC 31267 / DSM 46492 / JCM 5070 / NBRC 14893 / NCIMB 12804 / NRRL 8165 / MA-4680).